The sequence spans 173 residues: Photosystem I assembly protein Ycf3 (173 aa).

3 TPR repeats span residues 35–68 (AFVYYRDGMSAQADGEYAEALDNYYEALTLEEDP), 72–105 (SYILYNIGIIHASNGEHEKALEYYEEAIQLNPRM), and 120–153 (GEKAREDGQQAEAEALYDKAAEYWKQAIRLAPNN).

It belongs to the Ycf3 family.

The protein resides in the cellular thylakoid membrane. Functionally, essential for the assembly of the photosystem I (PSI) complex. May act as a chaperone-like factor to guide the assembly of the PSI subunits. In Microcystis aeruginosa (strain NIES-843 / IAM M-2473), this protein is Photosystem I assembly protein Ycf3.